Reading from the N-terminus, the 418-residue chain is Tyrosine--tRNA ligase (418 aa).

Tyr34 provides a ligand contact to L-tyrosine. A 'HIGH' region motif is present at residues 39–48 (PTADSLHLGH). L-tyrosine-binding residues include Tyr169 and Gln173. The short motif at 229 to 233 (KFGKS) is the 'KMSKS' region element. Lys232 is a binding site for ATP. Positions 352–418 (LNIVDMLVTA…GKKKYAVLTY (67 aa)) constitute an S4 RNA-binding domain.

The protein belongs to the class-I aminoacyl-tRNA synthetase family. TyrS type 1 subfamily. As to quaternary structure, homodimer.

It localises to the cytoplasm. It carries out the reaction tRNA(Tyr) + L-tyrosine + ATP = L-tyrosyl-tRNA(Tyr) + AMP + diphosphate + H(+). Catalyzes the attachment of tyrosine to tRNA(Tyr) in a two-step reaction: tyrosine is first activated by ATP to form Tyr-AMP and then transferred to the acceptor end of tRNA(Tyr). The chain is Tyrosine--tRNA ligase from Streptococcus equi subsp. zooepidemicus (strain MGCS10565).